The following is a 362-amino-acid chain: Phosphoserine aminotransferase (362 aa).

L-glutamate is bound by residues Ser9 and Arg42. Pyridoxal 5'-phosphate contacts are provided by residues 76–77 (GR), Trp102, Thr153, Asp174, and Gln197. Lys198 bears the N6-(pyridoxal phosphate)lysine mark. 239–240 (NT) is a binding site for pyridoxal 5'-phosphate.

It belongs to the class-V pyridoxal-phosphate-dependent aminotransferase family. SerC subfamily. As to quaternary structure, homodimer. Requires pyridoxal 5'-phosphate as cofactor.

It localises to the cytoplasm. The catalysed reaction is O-phospho-L-serine + 2-oxoglutarate = 3-phosphooxypyruvate + L-glutamate. It carries out the reaction 4-(phosphooxy)-L-threonine + 2-oxoglutarate = (R)-3-hydroxy-2-oxo-4-phosphooxybutanoate + L-glutamate. Its pathway is amino-acid biosynthesis; L-serine biosynthesis; L-serine from 3-phospho-D-glycerate: step 2/3. It functions in the pathway cofactor biosynthesis; pyridoxine 5'-phosphate biosynthesis; pyridoxine 5'-phosphate from D-erythrose 4-phosphate: step 3/5. Functionally, catalyzes the reversible conversion of 3-phosphohydroxypyruvate to phosphoserine and of 3-hydroxy-2-oxo-4-phosphonooxybutanoate to phosphohydroxythreonine. The polypeptide is Phosphoserine aminotransferase (Salmonella arizonae (strain ATCC BAA-731 / CDC346-86 / RSK2980)).